The sequence spans 1042 residues: Probable serine/threonine protein kinase IRE4 (1042 aa).

3 stretches are compositionally biased toward basic and acidic residues: residues 1-10, 102-115, and 314-327; these read MAEENRKDRG, EEIKLRGKNSGKDE, and QRNEAGQKFKRRDK. Disordered regions lie at residues 1–75, 90–115, and 297–327; these read MAEE…GTKL, PPKYACSSTTSSEEIKLRGKNSGKDE, and WGSTPRVDDSGSGYPEYQRNEAGQKFKRRDK. Residues 402-421 form a C2H2-type; atypical zinc finger; that stretch reads CRICEEEVPLFHLEPHSYIC. The Protein kinase domain occupies 670-955; it reads FEIIKPISRG…AAEVKSHPFF (286 aa). ATP is bound by residues 676–684 and K699; that span reads ISRGAFGKV. The active-site Proton acceptor is D793. A disordered region spans residues 830–850; it reads ESDVSPRTNSHHFQKNQEEER. Position 854 is a phosphoserine (S854). The AGC-kinase C-terminal domain maps to 956–1042; it reads QGVDWENLAL…KLFFLLLCVF (87 aa).

This sequence belongs to the protein kinase superfamily. AGC Ser/Thr protein kinase family.

It carries out the reaction L-seryl-[protein] + ATP = O-phospho-L-seryl-[protein] + ADP + H(+). The catalysed reaction is L-threonyl-[protein] + ATP = O-phospho-L-threonyl-[protein] + ADP + H(+). The protein is Probable serine/threonine protein kinase IRE4 of Arabidopsis thaliana (Mouse-ear cress).